A 295-amino-acid polypeptide reads, in one-letter code: uncharacterized protein (295 aa).

Basic residues predominate over residues 57 to 67 (RKLLVKQKRKS). A disordered region spans residues 57 to 94 (RKLLVKQKRKSNKEFQSNIIKKRKDEERKGTLKTEQAN). Over residues 79–88 (RKDEERKGTL) the composition is skewed to basic and acidic residues. Coiled coils occupy residues 87-116 (TLKT…YDQY) and 259-286 (DVLT…LGER).

The protein resides in the nucleus. This is an uncharacterized protein from Schizosaccharomyces pombe (strain 972 / ATCC 24843) (Fission yeast).